The chain runs to 273 residues: Pantothenate synthetase (273 aa).

27–34 contributes to the ATP binding site; sequence MGALHEGH. His-34 functions as the Proton donor in the catalytic mechanism. Position 58 (Gln-58) interacts with (R)-pantoate. Gln-58 serves as a coordination point for beta-alanine. 144–147 contributes to the ATP binding site; the sequence is GKKD. Residue Gln-150 participates in (R)-pantoate binding. ATP contacts are provided by residues Val-173 and 181–184; that span reads LSSR.

The protein belongs to the pantothenate synthetase family. As to quaternary structure, homodimer.

It is found in the cytoplasm. The enzyme catalyses (R)-pantoate + beta-alanine + ATP = (R)-pantothenate + AMP + diphosphate + H(+). It functions in the pathway cofactor biosynthesis; (R)-pantothenate biosynthesis; (R)-pantothenate from (R)-pantoate and beta-alanine: step 1/1. Its function is as follows. Catalyzes the condensation of pantoate with beta-alanine in an ATP-dependent reaction via a pantoyl-adenylate intermediate. The sequence is that of Pantothenate synthetase from Sulfurimonas denitrificans (strain ATCC 33889 / DSM 1251) (Thiomicrospira denitrificans (strain ATCC 33889 / DSM 1251)).